Here is a 57-residue protein sequence, read N- to C-terminus: Enolase (57 aa).

The active-site Proton donor is E25.

The protein belongs to the enolase family. The cofactor is Mg(2+).

It localises to the cytoplasm. The protein resides in the secreted. It is found in the cell surface. It catalyses the reaction (2R)-2-phosphoglycerate = phosphoenolpyruvate + H2O. It functions in the pathway carbohydrate degradation; glycolysis; pyruvate from D-glyceraldehyde 3-phosphate: step 4/5. In terms of biological role, catalyzes the reversible conversion of 2-phosphoglycerate (2-PG) into phosphoenolpyruvate (PEP). It is essential for the degradation of carbohydrates via glycolysis. The chain is Enolase from Clostridioides difficile (Peptoclostridium difficile).